The primary structure comprises 534 residues: Calcium uptake protein 1 homolog, mitochondrial (534 aa).

The N-terminal 32 residues, 1–32 (MLHCSFLRVIPIKNASKRLIIVRSLTSAPAKT), are a transit peptide targeting the mitochondrion. Residues 131 to 150 (PEASQKEEVTESNGEVEEVK) form a disordered region. EF-hand domains are found at residues 271–306 (TSHA…IMSQ), 338–359 (KDGK…LQHD), and 466–501 (LSDH…RMRR). The Ca(2+) site is built by Asp-284, Asp-286, Asn-288, and Glu-295.

It belongs to the MICU1 family. MICU1 subfamily. In terms of tissue distribution, expressed at low levels in PLM touch receptor neurons, germ cells, epidermis, and muscles.

The protein localises to the mitochondrion intermembrane space. The protein resides in the mitochondrion inner membrane. Calcium sensor of the mitochondrial calcium uniporter (mcu-1) channel, which senses calcium level via its EF-hand domains. At low calcium levels, micu-1 occludes the pore of the mcu-1 channel, preventing mitochondrial calcium uptake. At higher calcium levels, calcium-binding to micu-1 induces a conformational change that weakens mcu-1-micu-1 interactions and moves micu-1 away from the pore, allowing calcium permeation through the mcu-1 channel. Also required to protect against manganese toxicity by preventing manganese uptake by mcu-1. Modulates the activity of the mitochondrial calcium uniporter protein mcu-1 depending on the level of intracellular calcium in PLM touch receptor neurons following axonal injury. The protein is Calcium uptake protein 1 homolog, mitochondrial of Caenorhabditis elegans.